Consider the following 548-residue polypeptide: Probable malate:quinone oxidoreductase (548 aa).

The interval 521–548 is disordered; the sequence is DKPQAADSTPKPQLKPQPVQKEVADIAL. The segment covering 530–541 has biased composition (low complexity); sequence PKPQLKPQPVQK.

Belongs to the MQO family. The cofactor is FAD.

It catalyses the reaction (S)-malate + a quinone = a quinol + oxaloacetate. It participates in carbohydrate metabolism; tricarboxylic acid cycle; oxaloacetate from (S)-malate (quinone route): step 1/1. This chain is Probable malate:quinone oxidoreductase, found in Escherichia coli (strain 55989 / EAEC).